The chain runs to 101 residues: CLAVATA3/ESR (CLE)-related protein 18 (101 aa).

An N-terminal signal peptide occupies residues 1–25; sequence MHLLKGGVVLIITLILFLITSSIVA. The segment at 37 to 58 is disordered; the sequence is RQIPTGPDPLHNPPQPSPKHHH. A hydroxyproline mark is found at proline 40 and proline 43. Pro residues predominate over residues 42–53; it reads GPDPLHNPPQPS. A glycan (O-linked (Ara...) hydroxyproline) is linked at proline 43. Tyrosine 76 is subject to Sulfotyrosine. Residue proline 84 is modified to Hydroxyproline.

This sequence belongs to the CLV3/ESR signal peptide family. The tyrosine sulfation is critical for the function of the peptide. In terms of processing, the O-glycosylation (arabinosylation) of the hydroxyproline Pro-43 enhances binding affinity of the CLE18p peptide for its receptor. Expressed in roots, leaves, siliques and seedlings.

The protein resides in the secreted. Its subcellular location is the extracellular space. Its function is as follows. Root growth factor that regulates the pattern of root growth and lateral root development by modulating the length and the number of cortical cells in the root apical meristem (RAM), and the anticlinal asymmetric cell divisions in lateral root initiation cells. Extracellular signal peptide that regulates cell fate. Represses root apical meristem maintenance. Root growth factor that regulates the pattern of root growth and lateral root development. Regulates the transition of protophloem cells from proliferation to differentiation, thus impinging on postembryonic growth capacity of the root meristem; this signaling pathway requires CRN and CLV2. The sequence is that of CLAVATA3/ESR (CLE)-related protein 18 from Arabidopsis thaliana (Mouse-ear cress).